A 547-amino-acid polypeptide reads, in one-letter code: MATKLIKHGSKAREQMLEGIDILADAVKVTLGPKGRNVLIEQSFGSPKITKDGVTVAKSIELKDKIRNAGAQLLKSAATKAAEVAGDGTTTATVLARALAREGNKLVAAGYNPMDLKRGMDLAVNAVVEEIKKSSKKINSQEEIAQVGTISSNGDKEIGEKIAKAMEEVGKEGVITVEEAKNFSFDVEVVKGMMFDRGYLSPYFVTNSEKMVAELENPFILLFEKKLSNLQPMLPILEAVVQSQRPLLIIAEDVEGEALATLVVNRLRGGLKVAAVKAPGFGDRRKAMMEDIAILTKGELITEDLGMKLENVSIKSLGTAKRVTISKENTVIVDGNGDKKNIEDRVLQIKSQIAETTSDYDKEKLQERLAKLSGGVAVLKVGGATEVEVKERKDRVEDALAATRAAVEEGVVAGGGVTLLHASQPLTKLKVENKDQQAGIEIVIEALKDPLKQIVENAGENGGVVVGKLLEHKDKNYGFNAQDMQYVDMIKAGIIDPAKVVRTALQDATSVASLIITTETLIVDEPSDKAEPMPMRGGMGGMGGMDF.

ATP contacts are provided by residues 30–33, Lys-51, 87–91, Gly-415, and Asp-496; these read TLGP and DGTTT. A disordered region spans residues 527–547; that stretch reads SDKAEPMPMRGGMGGMGGMDF. The span at 537–547 shows a compositional bias: gly residues; it reads GGMGGMGGMDF.

The protein belongs to the chaperonin (HSP60) family. As to quaternary structure, forms a cylinder of 14 subunits composed of two heptameric rings stacked back-to-back. Interacts with the co-chaperonin GroES.

Its subcellular location is the cytoplasm. It catalyses the reaction ATP + H2O + a folded polypeptide = ADP + phosphate + an unfolded polypeptide.. Its function is as follows. Together with its co-chaperonin GroES, plays an essential role in assisting protein folding. The GroEL-GroES system forms a nano-cage that allows encapsulation of the non-native substrate proteins and provides a physical environment optimized to promote and accelerate protein folding. This Rickettsia africae (strain ESF-5) protein is Chaperonin GroEL.